Consider the following 215-residue polypeptide: Cytochrome b6 (215 aa).

A helical membrane pass occupies residues 32–52 (IFYCLGGITLTCFIVQVATGF). Residue cysteine 35 coordinates heme c. Positions 86 and 100 each coordinate heme b. Helical transmembrane passes span 90-110 (ASMMVLMMILHVFRVYLTGGF), 116-136 (LTWITGVVLAVLTVSFGVTGY), and 186-206 (LHTFVLPLLTAVFMLMHFLMI). Histidine 187 and histidine 202 together coordinate heme b.

It belongs to the cytochrome b family. PetB subfamily. As to quaternary structure, the 4 large subunits of the cytochrome b6-f complex are cytochrome b6, subunit IV (17 kDa polypeptide, PetD), cytochrome f and the Rieske protein, while the 4 small subunits are PetG, PetL, PetM and PetN. The complex functions as a dimer. Heme b is required as a cofactor. Requires heme c as cofactor.

It is found in the plastid. Its subcellular location is the chloroplast thylakoid membrane. Functionally, component of the cytochrome b6-f complex, which mediates electron transfer between photosystem II (PSII) and photosystem I (PSI), cyclic electron flow around PSI, and state transitions. The protein is Cytochrome b6 of Chara vulgaris (Common stonewort).